A 378-amino-acid chain; its full sequence is MPTSEPNDFFHGSVGIVQTQVATFDSLTLEGGETITPLEIAYETYGTLNQKKDNAILVCHALSGDAHAAGFHEGDKRPGWWDYYIGPGKAFDTNRYFIISSNVIGGCKGSSGPLSTNGNTGKPFQSTFPFVSIGDMVNAQEKLIRHFGIHKLFAVAGGSMGGMQALQWSVAYPDRLKNCIVMASSSEHSAQQIAFNEVGRQAILSDPNWNQGLYTQEKRPSKGLALARMMGHITYLSDEMMREKFGRKPPKGNIQSTDFAVGSYLIYQGESFVDRFDANSYIYVTKALDHFSLGTGKELTKVLSKVRCRFLVIAYTSDWLYPPYQSEEIVKSLEVNAVPVSFIELNNPAGHDSFLLPSEEQDSILRDFLSATDEGGFF.

One can recognise an AB hydrolase-1 domain in the interval 54–355 (NAILVCHALS…NNPAGHDSFL (302 aa)). The Nucleophile role is filled by S159. R228 lines the substrate pocket. Catalysis depends on residues D318 and H351. D352 lines the substrate pocket.

It belongs to the AB hydrolase superfamily. MetX family. Homodimer.

The protein resides in the cytoplasm. It catalyses the reaction L-homoserine + acetyl-CoA = O-acetyl-L-homoserine + CoA. It functions in the pathway amino-acid biosynthesis; L-methionine biosynthesis via de novo pathway; O-acetyl-L-homoserine from L-homoserine: step 1/1. In terms of biological role, transfers an acetyl group from acetyl-CoA to L-homoserine, forming acetyl-L-homoserine. The protein is Homoserine O-acetyltransferase of Leptospira biflexa serovar Patoc (strain Patoc 1 / Ames).